A 306-amino-acid chain; its full sequence is Acetyl-coenzyme A carboxylase carboxyl transferase subunit beta (306 aa).

Residues 28–297 (LWIKCPDTGQ…TPAGKPSTPV (270 aa)) form the CoA carboxyltransferase N-terminal domain. Residues 287–306 (QTPAGKPSTPVAPEPVPDAA) form a disordered region. The segment covering 296 to 306 (PVAPEPVPDAA) has biased composition (pro residues).

Belongs to the AccD/PCCB family. Acetyl-CoA carboxylase is a heterohexamer composed of biotin carboxyl carrier protein (AccB), biotin carboxylase (AccC) and two subunits each of ACCase subunit alpha (AccA) and ACCase subunit beta (AccD).

It localises to the cytoplasm. It carries out the reaction N(6)-carboxybiotinyl-L-lysyl-[protein] + acetyl-CoA = N(6)-biotinyl-L-lysyl-[protein] + malonyl-CoA. It functions in the pathway lipid metabolism; malonyl-CoA biosynthesis; malonyl-CoA from acetyl-CoA: step 1/1. Component of the acetyl coenzyme A carboxylase (ACC) complex. Biotin carboxylase (BC) catalyzes the carboxylation of biotin on its carrier protein (BCCP) and then the CO(2) group is transferred by the transcarboxylase to acetyl-CoA to form malonyl-CoA. In Methylorubrum populi (strain ATCC BAA-705 / NCIMB 13946 / BJ001) (Methylobacterium populi), this protein is Acetyl-coenzyme A carboxylase carboxyl transferase subunit beta.